Consider the following 568-residue polypeptide: Putative U-box domain-containing protein 55 (568 aa).

The stretch at 217 to 464 forms a coiled coil; that stretch reads QSESDRNDQL…KVAAEKDAAS (248 aa). In terms of domain architecture, U-box spans 496–568; that stretch reads QPPSYFICPI…AIQEWLQRNS (73 aa).

It catalyses the reaction S-ubiquitinyl-[E2 ubiquitin-conjugating enzyme]-L-cysteine + [acceptor protein]-L-lysine = [E2 ubiquitin-conjugating enzyme]-L-cysteine + N(6)-ubiquitinyl-[acceptor protein]-L-lysine.. It participates in protein modification; protein ubiquitination. Functionally, functions as an E3 ubiquitin ligase. This chain is Putative U-box domain-containing protein 55 (PUB55), found in Arabidopsis thaliana (Mouse-ear cress).